The sequence spans 333 residues: Taste receptor type 2 member 38 (333 aa).

The Extracellular portion of the chain corresponds to 1-17 (MLTLTRICAVSYEVRST). Residues 18–38 (FLFISVLEFAVGFLTNAFIFL) form a helical membrane-spanning segment. Residues 39-55 (VNFWDVVKRQPLSNSDC) are Cytoplasmic-facing. Residues 56–76 (VLLCLSISRLFLHGLLFLSAI) traverse the membrane as a helical segment. Residues 77 to 94 (QLTHFQKLSEPLNHSYQA) lie on the Extracellular side of the membrane. Residues 95–115 (IIMLWIIANQANLWLAACLSL) traverse the membrane as a helical segment. Residues 116–142 (LYCSKLIRFSHTFLICLASWVSRKISQ) lie on the Cytoplasmic side of the membrane. Residues 143–163 (MLLGIILCSCICTVLCVWCFF) traverse the membrane as a helical segment. Residues 164-190 (SRPHFTVTTFLFMNNNTRLNWQIKDLN) lie on the Extracellular side of the membrane. The N-linked (GlcNAc...) asparagine glycan is linked to Asn178. A helical transmembrane segment spans residues 191–211 (LFYSFLFCYLWSVPPFLLFLV). Residues 212–251 (SSGMLTVSLGRHMRTMKVYTRDSRDPSLEAHIKALKSLVS) are Cytoplasmic-facing. A helical transmembrane segment spans residues 252-272 (FFCFFVISSCAAFISVPLLIL). Residues 273 to 276 (WRNK) are Extracellular-facing. A helical membrane pass occupies residues 277–297 (IGVMVCVGIMAACPSGHAAVL). At 298–333 (ISGNATLRRAVTTILLWAQSSMKVRADHKADSRTLC) the chain is on the cytoplasmic side.

It belongs to the G-protein coupled receptor T2R family.

It is found in the membrane. Receptor that may play a role in the perception of bitterness and is gustducin-linked. May play a role in sensing the chemical composition of the gastrointestinal content. The activity of this receptor may stimulate alpha gustducin, mediate PLC-beta-2 activation and lead to the gating of TRPM5. This Pongo pygmaeus (Bornean orangutan) protein is Taste receptor type 2 member 38 (TAS2R38).